A 626-amino-acid polypeptide reads, in one-letter code: Myelin-associated glycoprotein (626 aa).

The first 19 residues, 1 to 19, serve as a signal peptide directing secretion; that stretch reads MIFLTTLPLFWIMISASRG. The segment at 20 to 325 is interaction with RTN4R and RTN4RL2; it reads GHWGAWMPSS…RTVELSVMYA (306 aa). Over 20–516 the chain is Extracellular; the sequence is GHWGAWMPSS…HRLMWAKIGP (497 aa). The Ig-like V-type domain maps to 22–120; sequence WGAWMPSSIS…LGGKYYFRGD (99 aa). Intrachain disulfides connect Cys37/Cys165, Cys42/Cys100, and Cys159/Cys217. 65–67 provides a ligand contact to a ganglioside GT1b (d18:1(4E)); it reads YPK. An N-linked (GlcNAc...) asparagine glycan is attached at Asn99. Residues Arg118 and 124-128 each bind a ganglioside GT1b (d18:1(4E)); that span reads YNQYT. 4 consecutive Ig-like C2-type domains span residues 139–237, 241–325, 327–412, and 413–508; these read NTPN…LDVK, VIVE…VMYA, WKPT…VEFA, and PIIL…GAHR. Asn223 and Asn246 each carry an N-linked (GlcNAc...) asparagine glycan. A disulfide bond links Cys261 and Cys305. N-linked (GlcNAc...) asparagine glycosylation is found at Asn315 and Asn332. Cys347 and Cys392 form a disulfide bridge. Asn406 carries an N-linked (GlcNAc...) asparagine glycan. Intrachain disulfides connect Cys421–Cys430 and Cys432–Cys488. Asn450 and Asn454 each carry an N-linked (GlcNAc...) asparagine glycan. A helical membrane pass occupies residues 517 to 536; that stretch reads VGAVVAFAILIAIVCYITQT. Cys531 carries S-palmitoyl cysteine lipidation. Residues 537–626 lie on the Cytoplasmic side of the membrane; sequence RRKKNVTESP…LAEYAEIRVK (90 aa). Ser545, Ser547, and Ser549 each carry phosphoserine. Residues 577 to 626 form a required for normal axon myelination in the central nervous system region; that stretch reads LGSERRLLGLRGEPPELDLSYSHSDLGKRPTKDSYTLTEELAEYAEIRVK. The tract at residues 581–608 is disordered; that stretch reads RRLLGLRGEPPELDLSYSHSDLGKRPTK.

Belongs to the immunoglobulin superfamily. SIGLEC (sialic acid binding Ig-like lectin) family. As to quaternary structure, monomer and homodimer. Interacts (via the first three N-terminal Ig-like domains) with RTN4R and RTN4RL2. Interacts with isoform 2 of BSG. N-glycosylated. In terms of processing, phosphorylated on tyrosine residues. Post-translationally, ubiquitinated, leading to proteasomal degradation. Detected in myelin. Detected in olfactory bulb and throughout the brain (at protein level). Detected in brain.

The protein localises to the cell membrane. The protein resides in the membrane raft. Functionally, adhesion molecule that mediates interactions between myelinating cells and neurons by binding to neuronal sialic acid-containing gangliosides and to the glycoproteins RTN4R and RTN4RL2. Not required for initial myelination, but seems to play a role in the maintenance of normal axon myelination. Protects motoneurons against apoptosis, also after injury; protection against apoptosis is probably mediated via interaction with neuronal RTN4R and RTN4RL2. Required to prevent degeneration of myelinated axons in adults; this probably depends on binding to gangliosides on the axon cell membrane. Negative regulator of neurite outgrowth; in dorsal root ganglion neurons the inhibition is mediated primarily via binding to neuronal RTN4R or RTN4RL2 and to a lesser degree via binding to neuronal gangliosides. In cerebellar granule cells the inhibition is mediated primarily via binding to neuronal gangliosides. In sensory neurons, inhibition of neurite extension depends only partially on RTN4R, RTN4RL2 and gangliosides. Inhibits axon longitudinal growth. Inhibits axon outgrowth by binding to RTN4R. Preferentially binds to alpha-2,3-linked sialic acid. Binds ganglioside Gt1b. The polypeptide is Myelin-associated glycoprotein (Mag) (Rattus norvegicus (Rat)).